Reading from the N-terminus, the 60-residue chain is Defensin-like protein 4 (60 aa).

Disulfide bonds link Cys4/Cys56, Cys17/Cys41, Cys26/Cys51, and Cys30/Cys53.

Belongs to the DEFL family. Protease inhibitor I18 (RTI/MTI-2) subfamily.

It localises to the secreted. In terms of biological role, inhibits trypsin and chymotrypsin. This chain is Defensin-like protein 4, found in Brassica napus (Rape).